Here is a 28-residue protein sequence, read N- to C-terminus: MNKVTDLRSAIELLKTIPGQLIETNXDV.

In terms of assembly, homopentamer.

The enzyme catalyses 3,4-dihydroxybenzoate + H(+) = catechol + CO2. With respect to regulation, inhibited by oxygen. Completely inhibited by HgCl(2). Partially inhibited by ZnSO(4), 2,3,4-trihydroxybeonzoate and 3,4,5-trihydroxybeonzoate. Unaffected by KCl, MnCl(2) or EDTA. Not stimulated by thiamine phosphate, pyridoxal 5'-phosphate or biotin. Not inhibited by hydroxylamine, NaBH(4) or avidin. In terms of biological role, reversibly catalyzes the decarboxylation of 3,4-dihydroxybenzoate to catechol. Inactive toward 4-hydroxybenzoate and other benzoate derivatives. The sequence is that of 3,4-dihydroxybenzoate decarboxylase from Sedimentibacter hydroxybenzoicus (Clostridium hydroxybenzoicum).